The sequence spans 407 residues: MKRAFIMVLDSFGIGATEDAERFGDAGSDTLGHIAEACAKGEADIGRKGPLHLPNLTKLGLAKAHEGATGFIPAGMDGNAEITGAYAWAHELSSGKDTPSGHWEIAGVPVLFDWGYFTDEKNSFPQELLDKLVERANLPGYLGNCHSSGTVILDELGEEHMKTGKPIFYTSADSVFQIACHEETFGLDRLYELCEIAREELTEGGYNIGRVIARPFVGDKAGNFQRTGNRHDLAVEPPSPVVLKKLVDEKGGHVVSVGKIADIYANMGITKKVKATGLDALFDATIKEMKEAGDNTIVFTNFVDFDSSWGHRRDVAGYAAGLELFDRRLPELLELVGEDDIIIFTADHGCDPTWKGTDHTREHIPVLVYGPKVKPGSLGHRDTFADIGQTVAKYFGLSDMEYGKALF.

6 residues coordinate Mn(2+): Asp10, Asp306, His311, Asp347, His348, and His359.

This sequence belongs to the phosphopentomutase family. Mn(2+) serves as cofactor.

The protein localises to the cytoplasm. It catalyses the reaction 2-deoxy-alpha-D-ribose 1-phosphate = 2-deoxy-D-ribose 5-phosphate. The enzyme catalyses alpha-D-ribose 1-phosphate = D-ribose 5-phosphate. Its pathway is carbohydrate degradation; 2-deoxy-D-ribose 1-phosphate degradation; D-glyceraldehyde 3-phosphate and acetaldehyde from 2-deoxy-alpha-D-ribose 1-phosphate: step 1/2. Isomerase that catalyzes the conversion of deoxy-ribose 1-phosphate (dRib-1-P) and ribose 1-phosphate (Rib-1-P) to deoxy-ribose 5-phosphate (dRib-5-P) and ribose 5-phosphate (Rib-5-P), respectively. This is Phosphopentomutase from Cronobacter sakazakii (strain ATCC BAA-894) (Enterobacter sakazakii).